Consider the following 241-residue polypeptide: uncharacterized protein (241 aa).

The HTH luxR-type domain occupies 147-212; sequence FSYRSVILTL…EMYAWINSAQ (66 aa).

This is an uncharacterized protein from Escherichia coli O157:H7.